We begin with the raw amino-acid sequence, 653 residues long: Translation factor GUF1, mitochondrial (653 aa).

The region spanning 56–236 (ENYRNFSIVA…SIIKNIPAPN (181 aa)) is the tr-type G domain. Residues 65 to 72 (AHVDHGKS), 129 to 133 (DTPGH), and 183 to 186 (NKID) each bind GTP.

The protein belongs to the TRAFAC class translation factor GTPase superfamily. Classic translation factor GTPase family. LepA subfamily.

It localises to the mitochondrion inner membrane. The enzyme catalyses GTP + H2O = GDP + phosphate + H(+). Functionally, promotes mitochondrial protein synthesis. May act as a fidelity factor of the translation reaction, by catalyzing a one-codon backward translocation of tRNAs on improperly translocated ribosomes. Binds to mitochondrial ribosomes in a GTP-dependent manner. The chain is Translation factor GUF1, mitochondrial from Candida tropicalis (strain ATCC MYA-3404 / T1) (Yeast).